Consider the following 544-residue polypeptide: CTP synthase (544 aa).

The segment at 1 to 266 is amidoligase domain; that stretch reads MKKRFIFITG…DQIICHHFKL (266 aa). Residue S14 participates in CTP binding. S14 lines the UTP pocket. Residues 15–20 and D72 contribute to the ATP site; that span reads SLGKGI. Positions 72 and 140 each coordinate Mg(2+). CTP-binding positions include 147–149, 187–192, and K223; these read DIE and KTKPTQ. Residues 187–192 and K223 each bind UTP; that span reads KTKPTQ. The Glutamine amidotransferase type-1 domain occupies 291 to 541; sequence TIGIIGKYIK…IKAAIQYKKI (251 aa). G352 contributes to the L-glutamine binding site. C379 (nucleophile; for glutamine hydrolysis) is an active-site residue. L-glutamine is bound by residues 380–383, E403, and R469; that span reads LGMQ. Residues H514 and E516 contribute to the active site.

The protein belongs to the CTP synthase family. As to quaternary structure, homotetramer.

It catalyses the reaction UTP + L-glutamine + ATP + H2O = CTP + L-glutamate + ADP + phosphate + 2 H(+). The catalysed reaction is L-glutamine + H2O = L-glutamate + NH4(+). The enzyme catalyses UTP + NH4(+) + ATP = CTP + ADP + phosphate + 2 H(+). The protein operates within pyrimidine metabolism; CTP biosynthesis via de novo pathway; CTP from UDP: step 2/2. Its activity is regulated as follows. Allosterically activated by GTP, when glutamine is the substrate; GTP has no effect on the reaction when ammonia is the substrate. The allosteric effector GTP functions by stabilizing the protein conformation that binds the tetrahedral intermediate(s) formed during glutamine hydrolysis. Inhibited by the product CTP, via allosteric rather than competitive inhibition. Functionally, catalyzes the ATP-dependent amination of UTP to CTP with either L-glutamine or ammonia as the source of nitrogen. Regulates intracellular CTP levels through interactions with the four ribonucleotide triphosphates. In Buchnera aphidicola subsp. Baizongia pistaciae (strain Bp), this protein is CTP synthase.